The chain runs to 44 residues: METPAFFFTTFLGCLLLSITGYSIYVGFGPPSKQLRDPFEEHED.

The helical transmembrane segment at 7 to 29 (FFTTFLGCLLLSITGYSIYVGFG) threads the bilayer.

This sequence belongs to the PsbN family.

It is found in the plastid. Its subcellular location is the chloroplast thylakoid membrane. Its function is as follows. May play a role in photosystem I and II biogenesis. In Pleurastrum terricola (Filamentous green alga), this protein is Protein PsbN.